The sequence spans 934 residues: Aconitate hydratase A (934 aa).

The interval 398–454 (EPVDESLPAKRMDSEGAVQKEGEDVAGYNSSRAGHGESAAEGAAGRQSNPVVVSSPN) is disordered. The segment covering 404-420 (LPAKRMDSEGAVQKEGE) has biased composition (basic and acidic residues). The span at 427-445 (SSRAGHGESAAEGAAGRQS) shows a compositional bias: low complexity. The [4Fe-4S] cluster site is built by C473, C539, and C542.

The protein belongs to the aconitase/IPM isomerase family. In terms of assembly, monomer. It depends on [4Fe-4S] cluster as a cofactor.

It catalyses the reaction citrate = D-threo-isocitrate. The catalysed reaction is (2S,3R)-3-hydroxybutane-1,2,3-tricarboxylate = 2-methyl-cis-aconitate + H2O. The protein operates within carbohydrate metabolism; tricarboxylic acid cycle; isocitrate from oxaloacetate: step 2/2. Its pathway is organic acid metabolism; propanoate degradation. Functionally, involved in the catabolism of short chain fatty acids (SCFA) via the tricarboxylic acid (TCA)(acetyl degradation route) and probably via the 2-methylcitrate cycle I (propionate degradation route). Catalyzes the reversible isomerization of citrate to isocitrate via cis-aconitate. Could catalyze the hydration of 2-methyl-cis-aconitate to yield (2R,3S)-2-methylisocitrate. The apo form of AcnA functions as a RNA-binding regulatory protein. In Corynebacterium diphtheriae (strain ATCC 700971 / NCTC 13129 / Biotype gravis), this protein is Aconitate hydratase A (acn).